We begin with the raw amino-acid sequence, 31 residues long: Photosystem II reaction center protein T (31 aa).

Residues 3–23 (SAAYILVLALALGVIFFAIAF) form a helical membrane-spanning segment.

The protein belongs to the PsbT family. As to quaternary structure, PSII is composed of 1 copy each of membrane proteins PsbA, PsbB, PsbC, PsbD, PsbE, PsbF, PsbH, PsbI, PsbJ, PsbK, PsbL, PsbM, PsbT, PsbX, PsbY, PsbZ, Psb30/Ycf12, peripheral proteins PsbO, CyanoQ (PsbQ), PsbU, PsbV and a large number of cofactors. It forms dimeric complexes.

It is found in the cellular thylakoid membrane. Its function is as follows. Found at the monomer-monomer interface of the photosystem II (PS II) dimer, plays a role in assembly and dimerization of PSII. PSII is a light-driven water plastoquinone oxidoreductase, using light energy to abstract electrons from H(2)O, generating a proton gradient subsequently used for ATP formation. The chain is Photosystem II reaction center protein T from Trichodesmium erythraeum (strain IMS101).